The primary structure comprises 394 residues: Large ribosomal subunit protein bL27m (394 aa).

The N-terminal 34 residues, 1 to 34, are a transit peptide targeting the mitochondrion; that stretch reads MSFIKQVGKLIRPNDYSSSIFQTSFLNNVIQVRT. 2 disordered regions span residues 36–57 and 145–181; these read TKRAAGSKTNKNDSAGRRLGPK and AEAEKEENHMSRKEFLQQPELEKTRQEQQNQEEQRAS. The segment covering 145-170 has biased composition (basic and acidic residues); the sequence is AEAEKEENHMSRKEFLQQPELEKTRQ.

It belongs to the bacterial ribosomal protein bL27 family.

The protein resides in the mitochondrion. Component of the large subunit of mitochondrial ribosome. This chain is Large ribosomal subunit protein bL27m (MRPL2), found in Debaryomyces hansenii (strain ATCC 36239 / CBS 767 / BCRC 21394 / JCM 1990 / NBRC 0083 / IGC 2968) (Yeast).